The primary structure comprises 414 residues: Enterobactin exporter EntS (414 aa).

The Cytoplasmic segment spans residues 1–21; that stretch reads MNRQSWLLNLSLLKTHPAFRA. Residues 22–42 traverse the membrane as a helical segment; it reads VFLARFISIVSLGLLGVAVPV. At 43–55 the chain is on the periplasmic side; it reads QIQMMTHSTWQVG. Residues 56-76 traverse the membrane as a helical segment; the sequence is LSVTLTGGAMFIGLMVGGVLA. Residues 77–83 lie on the Cytoplasmic side of the membrane; it reads DRYERKK. Residues 84 to 104 traverse the membrane as a helical segment; that stretch reads VILLARGTCGIGFIGLCVNSL. Residues 105 to 109 are Periplasmic-facing; it reads LPEPS. A helical membrane pass occupies residues 110 to 130; it reads LLAIYLLGLWDGFFASLGVTA. The Cytoplasmic segment spans residues 131-156; the sequence is LLAATPALVGRENLMQAGAITMLTVR. A helical membrane pass occupies residues 157–177; the sequence is LGSVISPMLGGILLASGGVAW. Asparagine 178 is a topological domain (periplasmic). A helical transmembrane segment spans residues 179–199; that stretch reads YGLAAAGTFITLLPLLTLPRL. At 200–218 the chain is on the cytoplasmic side; it reads PVPPQPRENPFIALLAAFR. The helical transmembrane segment at 219-239 threads the bilayer; sequence FLLASPLIGGIALLGGLVTMA. The Periplasmic segment spans residues 240–256; that stretch reads SAVRVLYPALAMSWQMS. A helical transmembrane segment spans residues 257-277; sequence AAQIGLLYAAIPLGAAIGALT. Over 278 to 287 the chain is Cytoplasmic; the sequence is SGQLAHSVRP. The helical transmembrane segment at 288–307 threads the bilayer; it reads GLIMLVSTVGSFLAVGLFAI. The Periplasmic portion of the chain corresponds to 308–313; sequence MPVWTA. A helical membrane pass occupies residues 314-336; that stretch reads GVICLALFGWLSAISSLLQYTLL. The Cytoplasmic portion of the chain corresponds to 337-356; sequence QTQTPENMLGRMNGLWTAQN. A helical transmembrane segment spans residues 357–377; that stretch reads VTGDAIGAALLGGLGAMMTPV. Alanine 378 is a topological domain (periplasmic). A helical transmembrane segment spans residues 379-399; the sequence is SASVSGFGLVIIGLLLLLVLG. The Cytoplasmic portion of the chain corresponds to 400–414; it reads ELRRFRQTPPVSDAG.

This sequence belongs to the major facilitator superfamily. EntS (TC 2.A.1.38) family.

Its subcellular location is the cell inner membrane. In terms of biological role, component of an export pathway for enterobactin. The sequence is that of Enterobactin exporter EntS from Salmonella choleraesuis (strain SC-B67).